The following is a 107-amino-acid chain: Nucleoid-associated protein HNE_0371 (107 aa).

This sequence belongs to the YbaB/EbfC family. As to quaternary structure, homodimer.

The protein resides in the cytoplasm. The protein localises to the nucleoid. In terms of biological role, binds to DNA and alters its conformation. May be involved in regulation of gene expression, nucleoid organization and DNA protection. This is Nucleoid-associated protein HNE_0371 from Hyphomonas neptunium (strain ATCC 15444).